Reading from the N-terminus, the 1845-residue chain is MTTMMTDSGTASDSGAGLVDSTRNDTTTTTTTTTTPGDNDADDDNTNGTTTGHHDNNETDNNSKSYSSTHHVPAIDNTSTTNANDNEDAAGFLDRDQSPLSSISSPLSEPDNFEFDTEPIPSILSPKSTTSDNHARDGETPELDEDGQPPAKRRRVRETTPHNHSRKPKPESPPWKKFEAEGPTTIITEDGRRKSGRVNPVLLGMKPSDKKVTRKAIQTSPVSNKSSASTSRKPAPASSSNSKHAPAKMPPPPPPPKAPARKSATTHETRPSASRSRRRSPSPRRPATPPKPAAVGTRRSTRQALAHSRASYDDGQLSPGASRATPRIKLKVRPPLTVIPLVHPNQANVRPKLGPTFEEYFARAHEIPVEEGGQHIPDEEPKYTDEMALQDAKVILRVEKEVEPGGLLAPDRCSAFEPEAEEEPPRQWAHLDHLTKAMTNFRKLMYREQQLHMQAAKRIAIACEAEWRRRNPQPKTAEEIELEEMEASKAKWRQVIRAFAGTWENVRVEVNRRRLVEWEAEEQRRVKAALNQAVNLSEQKLQQRQAQVDGDEITDEDEDEDDEDLASGMPSVMGDEKESDEHSDQGSDEMSDENDEDEDEDNMSSSEDDDKKSTASDEGLTQEELRAKYANLPTLGTTDETEETTKDVEMADAPAAMDGSVANDDDTSDESVDMDDDLGSSEESDDDEEEEEDDEEEEESDDEPAGLLGLFFGKSELKKLKEEAVTEEPSVEPAGDVEMTDASAALRPELQVNGHAHEAPITNGTHTNEQLASSQTEGADDEVSLLVIPNDEIAAENTQTAAEPGSGVVEKDFLTNDSSLKYPNEIVQSENQTLPAKESVEAGGDLPMVDAPSTDDLQRETAAAPSLEAPPNTRHDSQETVAATDMQSQSQTQSPKTTDTKPTDVDTPHSELAVSVQKPDSRQSSPQPTTPTVKTEIPFLLRGTLREYQHHGLDWLAGLYANNTNGILADEMGLGKTIQTIALLAHLACHHEVWGPHLVIVPTSVMLNWEMEFKKWCPGFKILTYYGNQEERKRKRQGWNNDDVWNVCITSYQMVLQDQQVFRRRRWHYMILDEAHNIKNFKSQRWQTLLGFNTQARLLLTGTPLQNNLTELWSLLYFLAPPENGEGGFVDLTEFHNWFARPESQILESGREQLDDEARAIIAKLHKVLRPYLLRRLKADVEKQMPAKYEHVEFCRLSKRQRELYDGFLSRADTRETLQSGNYMSIINCLMQLRKVCNHPDLFVDRPIMTSFRMSRSVPADYEWKEKFIRNRLLATKPMTTVNLSFLNMIPTEYEDLSKTHTDRIAQLSSHRILLDLREAQKVRANNAYTALDPSSVKSNLVYLESAARWGRFEELQHCVYINALRRQQRPIYGKRLTEFLTLDTHLRPYKPRPRVPAKIMSWFEEDSFLLHNAIPTLQQRAESMEMTITKFACVTPAVVTGPEMNRFLLGERGIQLFEDLDLKLSAPVKYAPYMPPQPPPDPWHEARMRLTIQFPDKRLLQYDCGKLQALDKLLRKLQAGGHRALIFTQMTKVLDILEQFLNIHGHKYLRLDGATKVEQRQILTDRFNHDPRILCFILSTRSGGLGINLTGADTVIFYDQDWNPAMDKQCQDRCHRIGQTRDVHIYRLVSEHTIEANILRKASQKQMLDDVVIQEGEFTTDYFNRLSVRDVLGSNGEVIASNEDDVAANLAMDRVLGGPSTTGAGGYDGTADGGGGASQPPVRNVGRVLEMAEDREDVDAAKAAEKEIMQDEADFGEAGSTRPGTPGDGLADLDGQLLGGEENKEVEDEVIEYNAWGERMHTIDEYMLGFMAKALEGTPLELPRDRKKGRDRNRNRKGKDSRKR.

Residues 1-13 (MTTMMTDSGTASD) are compositionally biased toward polar residues. A disordered region spans residues 1 to 329 (MTTMMTDSGT…GASRATPRIK (329 aa)). Over residues 24-38 (NDTTTTTTTTTTPGD) the composition is skewed to low complexity. Positions 63–84 (SKSYSSTHHVPAIDNTSTTNAN) are enriched in polar residues. Residues 98-108 (SPLSSISSPLS) show a composition bias toward low complexity. A compositionally biased stretch (basic and acidic residues) spans 168–180 (PKPESPPWKKFEA). Polar residues predominate over residues 216–243 (AIQTSPVSNKSSASTSRKPAPASSSNSK). Composition is skewed to pro residues over residues 248-258 (KMPPPPPPPKA) and 283-292 (PRRPATPPKP). The HSA domain maps to 418 to 493 (PEAEEEPPRQ…EMEASKAKWR (76 aa)). Disordered stretches follow at residues 539–713 (QKLQ…LFFG) and 749–935 (ELQV…TVKT). Acidic residues predominate over residues 549 to 565 (DGDEITDEDEDEDDEDL). A compositionally biased stretch (basic and acidic residues) spans 574-585 (GDEKESDEHSDQ). 2 stretches are compositionally biased toward acidic residues: residues 586–608 (GSDE…SSED) and 663–704 (NDDD…DDEP). Composition is skewed to polar residues over residues 762–777 (TNGT…SQTE) and 815–834 (TNDS…NQTL). Residues 888-897 (SQSQTQSPKT) show a composition bias toward low complexity. A compositionally biased stretch (basic and acidic residues) spans 898–909 (TDTKPTDVDTPH). Positions 922-933 (RQSSPQPTTPTV) are enriched in polar residues. In terms of domain architecture, Helicase ATP-binding spans 957–1122 (AGLYANNTNG…WSLLYFLAPP (166 aa)). 970-977 (DEMGLGKT) is a binding site for ATP. A DEAH box motif is present at residues 1073-1076 (DEAH). One can recognise a Helicase C-terminal domain in the interval 1510–1660 (ALDKLLRKLQ…DVVIQEGEFT (151 aa)). Disordered stretches follow at residues 1702–1724 (TTGA…PPVR), 1751–1783 (QDEA…GGEE), and 1816–1845 (LEGT…SRKR). The span at 1704 to 1718 (GAGGYDGTADGGGGA) shows a compositional bias: gly residues. Over residues 1769 to 1781 (DGLADLDGQLLGG) the composition is skewed to low complexity. Residues 1826–1845 (DRKKGRDRNRNRKGKDSRKR) are compositionally biased toward basic residues.

This sequence belongs to the SNF2/RAD54 helicase family. SWR1 subfamily. In terms of assembly, component of the SWR1 chromatin-remodeling complex.

It is found in the nucleus. It carries out the reaction ATP + H2O = ADP + phosphate + H(+). Catalytic component of the SWR1 complex which mediates the ATP-dependent exchange of histone H2A for the H2A variant H2A.Z leading to transcriptional regulation of selected genes by chromatin remodeling. The chain is Helicase swr-1 (crf1-1) from Neurospora crassa (strain ATCC 24698 / 74-OR23-1A / CBS 708.71 / DSM 1257 / FGSC 987).